A 138-amino-acid polypeptide reads, in one-letter code: Large ribosomal subunit protein uL16 (138 aa).

The span at 1–13 shows a compositional bias: basic residues; it reads MLQPSRRKFRKEQ. Residues 1–22 are disordered; it reads MLQPSRRKFRKEQKGRNTGIAT.

This sequence belongs to the universal ribosomal protein uL16 family. As to quaternary structure, part of the 50S ribosomal subunit.

In terms of biological role, binds 23S rRNA and is also seen to make contacts with the A and possibly P site tRNAs. The polypeptide is Large ribosomal subunit protein uL16 (Methylibium petroleiphilum (strain ATCC BAA-1232 / LMG 22953 / PM1)).